The primary structure comprises 138 residues: Small ribosomal subunit protein bS6 (138 aa).

A disordered region spans residues 100–138 (SPLAKGREEDDSDSSARRARDDSDDDGDDDEDDRRASAD). Residues 121-131 (DSDDDGDDDED) are compositionally biased toward acidic residues.

This sequence belongs to the bacterial ribosomal protein bS6 family.

Its function is as follows. Binds together with bS18 to 16S ribosomal RNA. The chain is Small ribosomal subunit protein bS6 from Thioalkalivibrio sulfidiphilus (strain HL-EbGR7).